The following is a 316-amino-acid chain: uncharacterized protein (316 aa).

Belongs to the chlamydial CPn_0441/CT_007/TC_0275 family.

This is an uncharacterized protein from Chlamydia trachomatis serovar D (strain ATCC VR-885 / DSM 19411 / UW-3/Cx).